The primary structure comprises 237 residues: MALSPPKIFVEDRQVPLDATSDPPALFDGTTRLYISYTCPFAQRVWITRNLKGLQDEIKLVPIDLPNRPAWLKEKVNPANKVPALEHNGKITGESLDLIKYVDSNFDGPSLYPEDSAKREFGEELLKYVDETFVKTVFGSFKGDPVKETASAFDHVENALKKFDDGPFFLGELSLVDIAYIPFIERFQVFLDEVFKYEIIIGRPNLAAWIEQMNKMVAYTQTKTDSEYVVNYFKRFM.

A GST N-terminal domain is found at Gly-29–Ser-110. Glutathione-binding positions include Cys-39 to Pro-40, Asn-67 to Arg-68, Lys-81 to Val-82, and Glu-94 to Ser-95. The region spanning Tyr-112–Tyr-232 is the GST C-terminal domain.

Belongs to the GST superfamily. Lambda family.

It is found in the cytoplasm. The protein localises to the cytosol. The enzyme catalyses RX + glutathione = an S-substituted glutathione + a halide anion + H(+). In terms of biological role, catalyzes the glutathione-dependent reduction of S-glutathionylquercetin to quercetin. In vitro, possesses glutathione-dependent thiol transferase activity toward 2-hydroxyethyl disulfide (HED). The protein is Glutathione S-transferase L1 (GSTL1) of Arabidopsis thaliana (Mouse-ear cress).